Consider the following 164-residue polypeptide: Ribosome maturation factor RimM (164 aa).

In terms of domain architecture, PRC barrel spans 93-164 (DSEYYVANLN…FVVIVPPEFI (72 aa)).

This sequence belongs to the RimM family. As to quaternary structure, binds ribosomal protein uS19.

It is found in the cytoplasm. Its function is as follows. An accessory protein needed during the final step in the assembly of 30S ribosomal subunit, possibly for assembly of the head region. Essential for efficient processing of 16S rRNA. May be needed both before and after RbfA during the maturation of 16S rRNA. It has affinity for free ribosomal 30S subunits but not for 70S ribosomes. The protein is Ribosome maturation factor RimM of Orientia tsutsugamushi (strain Boryong) (Rickettsia tsutsugamushi).